A 314-amino-acid chain; its full sequence is Olfactory receptor 10A6 (314 aa).

Over 1-25 (MERQNQSCVVEFILLGFSNYPELQG) the chain is Extracellular. N-linked (GlcNAc...) asparagine glycosylation occurs at asparagine 5. Residues 26–46 (QLFVAFLVIYLVTLIGNAIII) traverse the membrane as a helical segment. The Cytoplasmic portion of the chain corresponds to 47–54 (VIVSLDQS). Residues 55-75 (LHVPMYLFLLNLSVVDLSFSA) traverse the membrane as a helical segment. At 76-99 (VIMPEMLVVLSTEKTTISFGGCFA) the chain is on the extracellular side. Cysteine 97 and cysteine 189 are oxidised to a cystine. Residues 100–120 (QMYFILLFGGAECFLLGAMAY) traverse the membrane as a helical segment. Residues 121–139 (DRFAAICHPLNYQMIMNKG) are Cytoplasmic-facing. A helical transmembrane segment spans residues 140–160 (VFMKLIIFSWALGFMLGTVQT). At 161–197 (SWVSSFPFCGLNEINHISCETPAVLELACADTFLFEI) the chain is on the extracellular side. The chain crosses the membrane as a helical span at residues 198–217 (YAFTGTFLIILVPFLLILLS). At 218–237 (YIRVLFAILKMPSTTGRQKA) the chain is on the cytoplasmic side. A helical transmembrane segment spans residues 238 to 258 (FSTCAAHLTSVTLFYGTASMT). Residues 259–271 (YLQPKSGYSPETK) lie on the Extracellular side of the membrane. The helical transmembrane segment at 272 to 292 (KVMSLSYSLLTPLLNLLIYSL) threads the bilayer. Over 293–314 (RNSEMKRALMKLWRRRVVLHTI) the chain is Cytoplasmic.

The protein belongs to the G-protein coupled receptor 1 family.

It localises to the cell membrane. Its function is as follows. Odorant receptor. This is Olfactory receptor 10A6 (OR10A6) from Homo sapiens (Human).